Consider the following 230-residue polypeptide: UPF0494 membrane protein PB2B2.14c (230 aa).

3 helical membrane-spanning segments follow: residues 78–98 (WPLLIIWCILIVFAIDKNFEV), 120–140 (IWGPIAIYICLFVLLLLGLIY), and 148–168 (AIPLISIVIAAVVVIIAVAMV).

It belongs to the UPF0494 family.

Its subcellular location is the membrane. This chain is UPF0494 membrane protein PB2B2.14c, found in Schizosaccharomyces pombe (strain 972 / ATCC 24843) (Fission yeast).